We begin with the raw amino-acid sequence, 148 residues long: MDTQSFKTFNAKPDEVERDWYVVDATNQVVGRLASQIARVLRGKHKPTFTPHVDTGDYVIVVNADKARFTGKKEKQKEYHEYSGYPGGDHSHSPEEMRADKPTYIIREAVEGMLPTGPLGRDTFKKLKVYAGPDHPHEAQQPEPLDNA.

Composition is skewed to basic and acidic residues over residues 71 to 81 and 89 to 99; these read GKKEKQKEYHE and DHSHSPEEMRA. Disordered stretches follow at residues 71-99 and 125-148; these read GKKE…EMRA and KKLK…LDNA.

It belongs to the universal ribosomal protein uL13 family. Part of the 50S ribosomal subunit.

This protein is one of the early assembly proteins of the 50S ribosomal subunit, although it is not seen to bind rRNA by itself. It is important during the early stages of 50S assembly. The chain is Large ribosomal subunit protein uL13 from Salinibacter ruber (strain DSM 13855 / M31).